An 895-amino-acid polypeptide reads, in one-letter code: Alanine--tRNA ligase (895 aa).

Zn(2+) contacts are provided by His-577, His-581, Cys-680, and His-684.

The protein belongs to the class-II aminoacyl-tRNA synthetase family. Zn(2+) is required as a cofactor.

The protein localises to the cytoplasm. It carries out the reaction tRNA(Ala) + L-alanine + ATP = L-alanyl-tRNA(Ala) + AMP + diphosphate. Functionally, catalyzes the attachment of alanine to tRNA(Ala) in a two-step reaction: alanine is first activated by ATP to form Ala-AMP and then transferred to the acceptor end of tRNA(Ala). Also edits incorrectly charged Ser-tRNA(Ala) and Gly-tRNA(Ala) via its editing domain. The chain is Alanine--tRNA ligase from Kocuria rhizophila (strain ATCC 9341 / DSM 348 / NBRC 103217 / DC2201).